We begin with the raw amino-acid sequence, 251 residues long: Aliphatic sulfonates import ATP-binding protein SsuB (251 aa).

Residues 19-238 (GELRHVDKWY…PGEPGAHTER (220 aa)) form the ABC transporter domain. 51 to 58 (GRSGSGKS) contributes to the ATP binding site.

Belongs to the ABC transporter superfamily. Aliphatic sulfonates importer (TC 3.A.1.17.2) family. The complex is composed of two ATP-binding proteins (SsuB), two transmembrane proteins (SsuC) and a solute-binding protein (SsuA).

It is found in the cell membrane. It catalyses the reaction ATP + H2O + aliphatic sulfonate-[sulfonate-binding protein]Side 1 = ADP + phosphate + aliphatic sulfonateSide 2 + [sulfonate-binding protein]Side 1.. Functionally, part of the ABC transporter complex SsuABC involved in aliphatic sulfonates import. Responsible for energy coupling to the transport system. The polypeptide is Aliphatic sulfonates import ATP-binding protein SsuB (Mycobacterium avium (strain 104)).